Reading from the N-terminus, the 1893-residue chain is Transcription initiation factor TFIID subunit 1 (1893 aa).

The Protein kinase 1 domain maps to 1-435; sequence MGPGCDLLLR…VTQLHWEDDI (435 aa). Serine 137 is subject to Phosphoserine; by autocatalysis. Disordered regions lie at residues 155–184 and 197–224; these read LMPPPPPPPGPMKKDKDQDSITGVSENGEG and ASEKVDFSSSSDSESEMGPQEATQAESE. Over residues 156 to 165 the composition is skewed to pro residues; that stretch reads MPPPPPPPGP. Over residues 197–208 the composition is skewed to low complexity; the sequence is ASEKVDFSSSSD. Serine 328 carries the post-translational modification Phosphoserine; by autocatalysis. The interval 534–557 is disordered; it reads IPDEKEEATSNSPSKESKKESSLK. A histone acetyltransferase (HAT) region spans residues 538–997; that stretch reads KEEATSNSPS…KIPNKPTQQK (460 aa). Lysine 565 is subject to N6-acetyllysine. Glycyl lysine isopeptide (Lys-Gly) (interchain with G-Cter in SUMO2) cross-links involve residues lysine 570 and lysine 583. Disordered regions lie at residues 990–1009, 1128–1148, 1158–1177, and 1254–1278; these read PNKPTQQKDDKEPQPVKKTV, MLQNKKTSSQLSREREEQERK, GSAASGNNHRDDDTASVTSL, and RLKRNQEKEKLKGPPEKKPKKMKER. 2 stretches are compositionally biased toward basic and acidic residues: residues 995 to 1004 and 1139 to 1148; these read QQKDDKEPQP and SREREEQERK. Residues 1216–1294 constitute a DNA-binding region (HMG box; involved in promoter binding); the sequence is VRIRTTKDEE…CGACGAIGHM (79 aa). Positions 1254–1270 are enriched in basic and acidic residues; the sequence is RLKRNQEKEKLKGPPEK. Residues 1363-1650 are interaction with ASF1A and ASF1B; sequence VLKFPKQQLP…TAKEAALEEA (288 aa). The short motif at 1372 to 1379 is the Nuclear localization signal element; the sequence is PPKKKRRV. 2 Bromo domains span residues 1397–1505 and 1519–1628; these read RRRT…LKEK and LLDD…LTEY. The Protein kinase 2 domain maps to 1446–1893; the sequence is MDLQTLRENV…AGDSDLDSDE (448 aa). Residues 1651–1676 form a disordered region; the sequence is ELESLDPMTPGPYTPQPPDLYDTNTS. The segment covering 1659-1668 has biased composition (pro residues); it reads TPGPYTPQPP. Phosphoserine occurs at positions 1690, 1693, 1718, 1721, and 1723. The segment at 1696–1893 is disordered; sequence DIPSATPEKQ…AGDSDLDSDE (198 aa). 2 stretches are compositionally biased toward acidic residues: residues 1709–1723 and 1741–1756; these read EGEDGDGDLADEEEG and EGEDDEEDAGSDEEGD. Serine 1799, serine 1802, and serine 1820 each carry phosphoserine. A compositionally biased stretch (polar residues) spans 1830–1840; sequence KSNTQDTSFSS. Positions 1846-1857 are enriched in acidic residues; the sequence is VSEEEEDEEEEE. A Phosphoserine modification is found at serine 1847. Residues 1860 to 1869 show a composition bias toward polar residues; that stretch reads SGPSVLSQVH.

The protein belongs to the TAF1 family. Component of the TFIID basal transcription factor complex, composed of TATA-box-binding protein TBP, and a number of TBP-associated factors (TAFs), including TAF1, TAF2, TAF3, TAF4, TAF5, TAF6, TAF7, TAF8, TAF9, TAF10, TAF11, TAF12 and TAF13. Interacts with TAF7; the interaction is direct. TAF1, when part of the TFIID complex, interacts with C-terminus of TP53. Part of a TFIID-containing RNA polymerase II pre-initiation complex that is composed of TBP and at least GTF2A1, GTF2A2, GTF2E1, GTF2E2, GTF2F1, GTF2H2, GTF2H3, GTF2H4, GTF2H5, GTF2B, TCEA1, ERCC2, ERCC3, TAF1, TAF2, TAF3, TAF4, TAF5, TAF6, TAF7, TAF8, TAF9, TAF10, TAF11, TAF12 and TAF13. Component of some MLL1/MLL complex, at least composed of the core components KMT2A/MLL1, ASH2L, HCFC1/HCF1, WDR5 and RBBP5, as well as the facultative components BACC1, CHD8, E2F6, HSP70, INO80C, KANSL1, LAS1L, MAX, MCRS1, MGA, KAT8/MOF, PELP1, PHF20, PRP31, RING2, RUVB1/TIP49A, RUVB2/TIP49B, SENP3, TAF1, TAF4, TAF6, TAF7, TAF9 and TEX10. RB1 interacts with the N-terminal domain of TAF1. Interacts with ASF1A and ASF1B. Interacts (via bromo domains) with acetylated lysine residues on the N-terminus of histone H1.4, H2A, H2B, H3 and H4 (in vitro). In terms of assembly, (Microbial infection) Interacts with SV40 Large T antigen. As to quaternary structure, (Microbial infection) Interacts with herpes simplex virus 1 ICP4. Mg(2+) is required as a cofactor. Phosphorylated by casein kinase II in vitro.

It localises to the nucleus. It catalyses the reaction L-seryl-[protein] + ATP = O-phospho-L-seryl-[protein] + ADP + H(+). It carries out the reaction L-threonyl-[protein] + ATP = O-phospho-L-threonyl-[protein] + ADP + H(+). The enzyme catalyses L-lysyl-[protein] + acetyl-CoA = N(6)-acetyl-L-lysyl-[protein] + CoA + H(+). Autophosphorylates on Ser residues. Inhibited by retinoblastoma tumor suppressor protein, RB1. Binding to TAF7 or CIITA inhibits the histone acetyltransferase activity. The TFIID basal transcription factor complex plays a major role in the initiation of RNA polymerase II (Pol II)-dependent transcription. TFIID recognizes and binds promoters with or without a TATA box via its subunit TBP, a TATA-box-binding protein, and promotes assembly of the pre-initiation complex (PIC). The TFIID complex consists of TBP and TBP-associated factors (TAFs), including TAF1, TAF2, TAF3, TAF4, TAF5, TAF6, TAF7, TAF8, TAF9, TAF10, TAF11, TAF12 and TAF13. TAF1 is the largest component and core scaffold of the TFIID complex, involved in nucleating complex assembly. TAF1 forms a promoter DNA binding subcomplex of TFIID, together with TAF7 and TAF2. Contains novel N- and C-terminal Ser/Thr kinase domains which can autophosphorylate or transphosphorylate other transcription factors. Phosphorylates TP53 on 'Thr-55' which leads to MDM2-mediated degradation of TP53. Phosphorylates GTF2A1 and GTF2F1 on Ser residues. Possesses DNA-binding activity. Essential for progression of the G1 phase of the cell cycle. Exhibits histone acetyltransferase activity towards histones H3 and H4. The protein is Transcription initiation factor TFIID subunit 1 of Homo sapiens (Human).